We begin with the raw amino-acid sequence, 289 residues long: HTH-type transcriptional regulator SoxR (289 aa).

Residues 1 to 58 (MEIKDLQIFQKVVEYGSVSKAAKSLNYVQSYVTVRIQKLEEELQTELFHRSSRGMVLN) form the HTH lysR-type domain. Residues 18–37 (VSKAAKSLNYVQSYVTVRIQ) constitute a DNA-binding region (H-T-H motif).

This sequence belongs to the LysR transcriptional regulatory family.

Functionally, transcriptional repressor of soxA gene expression. The chain is HTH-type transcriptional regulator SoxR (soxR) from Arthrobacter sp. (strain TE1826).